The sequence spans 248 residues: Mannose-binding protein C (248 aa).

A signal peptide spans 1-20 (MSLFPSLPLLLLSVVATSYS). A Collagen-like domain is found at 42-99 (GINGFPGKDGRDGTKGEKGEPGQGLRGLQGPPGKLGPPGNPGPSGSPGPKGQKGDPGE). The disordered stretch occupies residues 43–111 (INGFPGKDGR…DCDSSLAASE (69 aa)). 4-hydroxyproline is present on P47. The span at 49–61 (KDGRDGTKGEKGE) shows a compositional bias: basic and acidic residues. 4 positions are modified to 4-hydroxyproline: P73, P79, P82, and P88. A compositionally biased stretch (pro residues) spans 75 to 87 (KLGPPGNPGPSGS). Positions 112 to 130 (RKALQTEMAHIKKWLTFSL) form a coiled coil. One can recognise a C-type lectin domain in the interval 134–245 (VGNKFFLTNG…CSSSHLALCE (112 aa)). 2 disulfide bridges follow: C155–C244 and C222–C236.

As to quaternary structure, oligomeric complex of 3 or more homotrimers. Interacts with MASP1 and MASP2. Interacts with MEP1A and MEP1B and may inhibit their catalytic activity. Post-translationally, hydroxylation on proline residues within the sequence motif, GXPG, is most likely to be 4-hydroxy as this fits the requirement for 4-hydroxylation in vertebrates.

The protein localises to the secreted. In terms of biological role, calcium-dependent lectin involved in innate immune defense. Binds mannose, fucose and N-acetylglucosamine on different microorganisms and activates the lectin complement pathway. Binds to late apoptotic cells, as well as to apoptotic blebs and to necrotic cells, but not to early apoptotic cells, facilitating their uptake by macrophages. The polypeptide is Mannose-binding protein C (MBL2) (Trachypithecus obscurus (Dusky leaf-monkey)).